Reading from the N-terminus, the 1187-residue chain is DENN domain and WD repeat-containing protein SCD1 (1187 aa).

Positions 19–179 (TVDGDLGFHG…NVPLPTPGKD (161 aa)) constitute a uDENN domain. One can recognise a cDENN domain in the interval 199-330 (SLPQADISLQ…EFSTLRNDIL (132 aa)). The dDENN domain occupies 332-437 (LLHPNVVAID…ERRLSSDEKS (106 aa)). Disordered stretches follow at residues 508–536 (SGAL…SSME) and 765–793 (SAGL…GRSW). Residues 526-536 (NTKEDNFSSME) are compositionally biased toward basic and acidic residues. Residues 779-793 (SDETQQPSEASGRSW) are compositionally biased toward polar residues. WD repeat units follow at residues 841–892 (GHGG…SELR), 897–934 (GHTG…LLEE), 937–975 (GHDS…CVAT), 978–1017 (RCSS…QMHK), 1020–1057 (GHTK…CDAV), 1060–1099 (CHAG…IKCV), 1104–1141 (LHSS…GTKV), and 1152–1187 (RTAA…TINI).

In terms of assembly, interacts with FLS2. As to expression, expressed in roots, rosette and cauline leaves, buds and flowers.

Its subcellular location is the cell membrane. The protein localises to the cytoplasmic vesicle. The protein resides in the clathrin-coated vesicle. In terms of biological role, involved in growth and development through its role in cytokinesis and polarized cell expansion. Required for plasma membrane internalization. May function in clathrin-mediated membrane trafficking, including plasma membrane endocytosis, essential to both cytokinesis and cell expansion. Acts as a negative regulator of basal resistance against bacteria. The chain is DENN domain and WD repeat-containing protein SCD1 from Arabidopsis thaliana (Mouse-ear cress).